The primary structure comprises 372 residues: Spermidine/putrescine import ATP-binding protein PotA (372 aa).

An ABC transporter domain is found at 11–241 (IELRSIKKSY…PANLFVARFI (231 aa)). ATP is bound at residue 43–50 (GPSGCGKT).

This sequence belongs to the ABC transporter superfamily. Spermidine/putrescine importer (TC 3.A.1.11.1) family. In terms of assembly, the complex is composed of two ATP-binding proteins (PotA), two transmembrane proteins (PotB and PotC) and a solute-binding protein (PotD).

The protein localises to the cell inner membrane. It catalyses the reaction ATP + H2O + polyamine-[polyamine-binding protein]Side 1 = ADP + phosphate + polyamineSide 2 + [polyamine-binding protein]Side 1.. In terms of biological role, part of the ABC transporter complex PotABCD involved in spermidine/putrescine import. Responsible for energy coupling to the transport system. The sequence is that of Spermidine/putrescine import ATP-binding protein PotA from Haemophilus influenzae (strain ATCC 51907 / DSM 11121 / KW20 / Rd).